A 404-amino-acid chain; its full sequence is Cysteine desulfurase IscS (404 aa).

Residues 75–76 (AT), Asn-155, Gln-183, and 203–205 (SGH) contribute to the pyridoxal 5'-phosphate site. Lys-206 is subject to N6-(pyridoxal phosphate)lysine. Position 243 (Thr-243) interacts with pyridoxal 5'-phosphate. Cys-328 serves as the catalytic Cysteine persulfide intermediate. Cys-328 is a binding site for [2Fe-2S] cluster.

This sequence belongs to the class-V pyridoxal-phosphate-dependent aminotransferase family. NifS/IscS subfamily. In terms of assembly, homodimer. Forms a heterotetramer with IscU, interacts with other sulfur acceptors. Requires pyridoxal 5'-phosphate as cofactor.

It localises to the cytoplasm. It catalyses the reaction (sulfur carrier)-H + L-cysteine = (sulfur carrier)-SH + L-alanine. The protein operates within cofactor biosynthesis; iron-sulfur cluster biosynthesis. Master enzyme that delivers sulfur to a number of partners involved in Fe-S cluster assembly, tRNA modification or cofactor biosynthesis. Catalyzes the removal of elemental sulfur atoms from cysteine to produce alanine. Functions as a sulfur delivery protein for Fe-S cluster synthesis onto IscU, an Fe-S scaffold assembly protein, as well as other S acceptor proteins. This Shewanella putrefaciens (strain CN-32 / ATCC BAA-453) protein is Cysteine desulfurase IscS.